The sequence spans 261 residues: MTLKARVIPCLDVKDGRVVKGVNFVDLIDAGDPVEAARAYDAAGADELCFLDITASSDNRETIFDVVARTAEQCFMPLTVGGGVRQVADIRKLLLAGADKVSINTAAVKNPEFVAEAADKFGNQCIVVAIDAKKVSGAGENDRWEIFTHGGRQPTGIDAVEFAQKVVDLGAGEILLTSMDRDGTKAGYDVALTRAVADSVRAPVIASGGVGTLDHLVAGIRDGHATAVLAASIFHFGTYTIGEAKRYMAEAGIPMRLDPVR.

Residues aspartate 12 and aspartate 131 contribute to the active site.

Belongs to the HisA/HisF family. In terms of assembly, heterodimer of HisH and HisF.

It localises to the cytoplasm. It catalyses the reaction 5-[(5-phospho-1-deoxy-D-ribulos-1-ylimino)methylamino]-1-(5-phospho-beta-D-ribosyl)imidazole-4-carboxamide + L-glutamine = D-erythro-1-(imidazol-4-yl)glycerol 3-phosphate + 5-amino-1-(5-phospho-beta-D-ribosyl)imidazole-4-carboxamide + L-glutamate + H(+). Its pathway is amino-acid biosynthesis; L-histidine biosynthesis; L-histidine from 5-phospho-alpha-D-ribose 1-diphosphate: step 5/9. IGPS catalyzes the conversion of PRFAR and glutamine to IGP, AICAR and glutamate. The HisF subunit catalyzes the cyclization activity that produces IGP and AICAR from PRFAR using the ammonia provided by the HisH subunit. This is Imidazole glycerol phosphate synthase subunit HisF from Brucella abortus (strain S19).